Consider the following 209-residue polypeptide: Ribosomal RNA large subunit methyltransferase E (209 aa).

S-adenosyl-L-methionine is bound by residues G63, W65, D83, D99, and D124. K164 acts as the Proton acceptor in catalysis.

This sequence belongs to the class I-like SAM-binding methyltransferase superfamily. RNA methyltransferase RlmE family.

The protein resides in the cytoplasm. It carries out the reaction uridine(2552) in 23S rRNA + S-adenosyl-L-methionine = 2'-O-methyluridine(2552) in 23S rRNA + S-adenosyl-L-homocysteine + H(+). Specifically methylates the uridine in position 2552 of 23S rRNA at the 2'-O position of the ribose in the fully assembled 50S ribosomal subunit. The protein is Ribosomal RNA large subunit methyltransferase E of Yersinia pseudotuberculosis serotype O:1b (strain IP 31758).